We begin with the raw amino-acid sequence, 302 residues long: Sulfate adenylyltransferase subunit 2 (302 aa).

Belongs to the PAPS reductase family. CysD subfamily. As to quaternary structure, heterodimer composed of CysD, the smaller subunit, and CysN.

It carries out the reaction sulfate + ATP + H(+) = adenosine 5'-phosphosulfate + diphosphate. The protein operates within sulfur metabolism; hydrogen sulfide biosynthesis; sulfite from sulfate: step 1/3. Functionally, with CysN forms the ATP sulfurylase (ATPS) that catalyzes the adenylation of sulfate producing adenosine 5'-phosphosulfate (APS) and diphosphate, the first enzymatic step in sulfur assimilation pathway. APS synthesis involves the formation of a high-energy phosphoric-sulfuric acid anhydride bond driven by GTP hydrolysis by CysN coupled to ATP hydrolysis by CysD. The polypeptide is Sulfate adenylyltransferase subunit 2 (Xanthomonas oryzae pv. oryzae (strain MAFF 311018)).